The following is a 908-amino-acid chain: MTSGEEEEGTREQVPVSQPTGTTSIVSTKEKQPNIFIRAIRATFGYRKTSLTLFVLLTIFFTVAFSSYDNSLDFTIDLPETKFEKQLLDSSWLDLQNIARYPHSYGSHANDKVHDYLESRISQTIKGKPFIEFDNGDEKILYNSSKKVVSYYEGNNLLVRVNGTDSSLPAFLLSAHYDSVPSSYGVTDDGMGIASLLGVLSYLANNKQPKRTVIFNFNNDEEFGLYGAQAFVTHPWFKQIQYFLNLEGTGAGGKAILFRGTDYGIVKHFDKVRYPYATSIFQQGFNNRLIHSETDYKVYKEAGLRGLDLAFYKPRDIYHTGEDNIKNINIRSLWHMLSNSIDFTNFISNSIIDNDTGKDEPAIYLSVLNYFFSTSVTTLNTINMVLIVLFPVLSGPLLFITVRYKKWNIGTANLFSLPLAIVITSLVGAVVVNQGFRLVNEFLPASRPMLLVTTTTSILLLTYYILLNGINFVSPSGDQKLVSIIQISFIYWIALIFVTRGLSQNAIGDDHTGEFAFTILFLLEATASLFGLIGWTFTRSVKEPTGDEEPLLNGRMERYVDGSDDEDDVEEEDDEDQSEEENHQHEMTVKHLMQHFGYDWSLQFLLIVPISSLVIYNSGWLVIDGINKSIQESLVAENFIYLIIQLFSQFWILPILPFVYKLNRFMVLGLIAFALVGVTLISSVDPFNQDNPLKLRFIERDGVAHVYGRTGVGISNILGDMPSVKESGVGIKCDSLPDGNEDCSYKAYLPGNSTIPSLSVKSINSTAQQAYINFGAIQINAPESRECSLEFKKVKAIVVYSGEITAKNFKAIPDGFSEDSKGNLYYKDVSGIDVAQLNKLGWNKKFNFGFYWLPDIDDDVAALPIHVECFWSDITIPAYDELLHYTPNWVTWANREKGLVSLTNRIEV.

The segment at 1–25 (MTSGEEEEGTREQVPVSQPTGTTSI) is disordered. Over 1-48 (MTSGEEEEGTREQVPVSQPTGTTSIVSTKEKQPNIFIRAIRATFGYRK) the chain is Cytoplasmic. The segment covering 15 to 25 (PVSQPTGTTSI) has biased composition (polar residues). A helical membrane pass occupies residues 49 to 69 (TSLTLFVLLTIFFTVAFSSYD). Residues 70 to 381 (NSLDFTIDLP…FSTSVTTLNT (312 aa)) are Vacuolar-facing. 2 N-linked (GlcNAc...) asparagine glycosylation sites follow: N143 and N162. Zn(2+) contacts are provided by H176 and D188. The active-site Proton acceptor is E221. 3 residues coordinate Zn(2+): E222, E247, and H319. Residue N354 is glycosylated (N-linked (GlcNAc...) asparagine). The helical transmembrane segment at 382–402 (INMVLIVLFPVLSGPLLFITV) threads the bilayer. Over 403–411 (RYKKWNIGT) the chain is Cytoplasmic. A helical transmembrane segment spans residues 412–432 (ANLFSLPLAIVITSLVGAVVV). Over 433 to 449 (NQGFRLVNEFLPASRPM) the chain is Vacuolar. Residues 450–470 (LLVTTTTSILLLTYYILLNGI) form a helical membrane-spanning segment. The Cytoplasmic segment spans residues 471–480 (NFVSPSGDQK). A helical membrane pass occupies residues 481–501 (LVSIIQISFIYWIALIFVTRG). The Vacuolar portion of the chain corresponds to 502-514 (LSQNAIGDDHTGE). The chain crosses the membrane as a helical span at residues 515 to 535 (FAFTILFLLEATASLFGLIGW). The Cytoplasmic segment spans residues 536–602 (TFTRSVKEPT…MQHFGYDWSL (67 aa)). The interval 543 to 584 (EPTGDEEPLLNGRMERYVDGSDDEDDVEEEDDEDQSEEENHQ) is disordered. Residues 562–579 (GSDDEDDVEEEDDEDQSE) show a composition bias toward acidic residues. The helical transmembrane segment at 603–623 (QFLLIVPISSLVIYNSGWLVI) threads the bilayer. At 624–638 (DGINKSIQESLVAEN) the chain is on the vacuolar side. N627 carries an N-linked (GlcNAc...) asparagine glycan. A helical transmembrane segment spans residues 639 to 659 (FIYLIIQLFSQFWILPILPFV). Residues 660–664 (YKLNR) lie on the Cytoplasmic side of the membrane. A helical transmembrane segment spans residues 665–685 (FMVLGLIAFALVGVTLISSVD). At 686 to 908 (PFNQDNPLKL…LVSLTNRIEV (223 aa)) the chain is on the vacuolar side. N-linked (GlcNAc...) asparagine glycans are attached at residues N752 and N764.

The protein belongs to the peptidase M28 family. Zn(2+) serves as cofactor.

Its subcellular location is the vacuole membrane. Functionally, may be involved in vacuolar sorting and osmoregulation. This chain is Vacuolar membrane protease, found in Candida tropicalis (strain ATCC MYA-3404 / T1) (Yeast).